Consider the following 309-residue polypeptide: MAADESVFLRAKDRSYKGLTEDEQKEWSGPFYFIQAADPQLGLMKAWRIGDCDSGGDEWDEEVQLTKQAVQAINKLQPKPRFIVLCGDLVHAMPGSPFREQQIKDLKDALRGTDPHIPLVFVSGNHDLGNAPTPDTVEQFCHEWGDDYFSFWVGGVLCLVLNSQFFFDSSGCPELMEAHEVWLENRLQMAVQTPSRHVLVFQHIPLFLRTPDEEDDYFNLQRGIREHLIQRFKRAGVKAVFSGHYHRNAGGCHDGLDMVVSSAVGCQLGDDTHGVRVVVVTENNIIHRYHSLDQLSERGMDEDLKKLLL.

The segment at 47 to 250 (WRIGDCDSGG…FSGHYHRNAG (204 aa)) is catalytic. Residues D51, D88, N125, and H244 each contribute to the a divalent metal cation site.

It belongs to the metallophosphoesterase superfamily. CPPED1 family. The cofactor is a divalent metal cation.

It localises to the cytoplasm. The enzyme catalyses O-phospho-L-seryl-[protein] + H2O = L-seryl-[protein] + phosphate. The catalysed reaction is O-phospho-L-threonyl-[protein] + H2O = L-threonyl-[protein] + phosphate. Functionally, protein phosphatase involved in the dephosphorylation of AKT kinase family. The chain is Serine/threonine-protein phosphatase CPPED1 (cpped1) from Danio rerio (Zebrafish).